An 813-amino-acid chain; its full sequence is Serine/threonine-protein kinase kin-29 (813 aa).

One can recognise a Protein kinase domain in the interval 18–269 (YDVGRAIGKG…IQNVLAHRWM (252 aa)). ATP contacts are provided by residues 24–32 (IGKGNFATV) and K47. D140 (proton acceptor) is an active-site residue. Positions 383–412 (LSSPDCDSDDSSNSDLCDESPLSSLEPNHK) are disordered. Residues 388–400 (CDSDDSSNSDLCD) show a composition bias toward acidic residues.

The protein belongs to the protein kinase superfamily. CAMK Ser/Thr protein kinase family. SNF1 subfamily. Interacts with tax-6. It depends on Mg(2+) as a cofactor. Post-translationally, autophosphorylated. Elevated cAMP levels appears to act via PKA to directly or indirectly phosphorylate multiple sites on kin-29 and inhibit function.

Its subcellular location is the cytoplasm. The protein resides in the nucleus. It catalyses the reaction L-seryl-[protein] + ATP = O-phospho-L-seryl-[protein] + ADP + H(+). It carries out the reaction L-threonyl-[protein] + ATP = O-phospho-L-threonyl-[protein] + ADP + H(+). Its function is as follows. Regulates chemoreceptor expression by phosphorylating the hda-4 class II histone deacetylase (HDAC) and inhibiting the gene repression functions of hda-4 and the mef-2 transcription factor, enabling the correct sensing and transduction of food signals. Role in determining body size, the dauer decision and serotonin-mediated egg laying. May modulate the Sma/Mab pathway and regulates development in the later larval stages. The chain is Serine/threonine-protein kinase kin-29 from Caenorhabditis briggsae.